The chain runs to 484 residues: Putative transporter B0252.3 (484 aa).

11 helical membrane passes run 43 to 63, 95 to 115, 121 to 141, 144 to 164, 183 to 203, 208 to 228, 286 to 306, 321 to 341, 348 to 368, 373 to 393, and 433 to 453; these read ILTC…TGLC, STTT…PPLA, LPVF…SAFS, IMMF…AGLA, VYFG…AYIL, YLMF…YMTV, MFIV…FIYF, LNFV…PIFM, VLIS…VLSS, IHFW…IYMF, and LAPA…TLIL.

The protein belongs to the major facilitator superfamily. Sugar transporter (TC 2.A.1.1) family.

Its subcellular location is the membrane. In Caenorhabditis elegans, this protein is Putative transporter B0252.3.